Reading from the N-terminus, the 438-residue chain is (3,5-dihydroxyphenyl)acetyl-CoA 1,2-dioxygenase (438 aa).

Residues Asp183, Glu189, His222–Tyr225, Ala233–Lys238, Gly296, Ile325–Gly327, and Gln416 contribute to the substrate site.

The protein belongs to the enoyl-CoA hydratase/isomerase family. As to quaternary structure, homohexamer; dimer of trimers.

It catalyses the reaction (3,5-dihydroxyphenyl)acetyl-CoA + O2 = 2-(3,5-dihydroxyphenyl)-2-oxoacetate + CoA + H(+). Its activity is regulated as follows. Inhibited by DPA-S-(N-acetylcysteamine). Involved in the biosynthesis of the nonproteinogenic amino acid monomer (S)-3,5-dihydroxyphenylglycine (Dpg) responsible of the production of vancomycin and teicoplanin antibiotics. Catalyzes the unusual conversion 3,5-dihydroxyphenylacetyl-CoA (DPA-CoA) to 3,5-dihydroxyphenylglyoxylate. DpgC performed a net four-electron oxidation of the benzylic carbon of DPA-CoA and the hydrolysis of the thioester bond to generate free CoA. DpgC has the ability to process a diverse range of substituted phenylacetyl-CoA substrates. The chain is (3,5-dihydroxyphenyl)acetyl-CoA 1,2-dioxygenase from Streptomyces toyocaensis.